Here is a 208-residue protein sequence, read N- to C-terminus: Uracil phosphoribosyltransferase (208 aa).

5-phospho-alpha-D-ribose 1-diphosphate-binding positions include arginine 78, arginine 103, and 130 to 138 (DPMLATGGS). Uracil contacts are provided by residues isoleucine 193 and 198–200 (GDA). Aspartate 199 contacts 5-phospho-alpha-D-ribose 1-diphosphate.

Belongs to the UPRTase family. Requires Mg(2+) as cofactor.

The enzyme catalyses UMP + diphosphate = 5-phospho-alpha-D-ribose 1-diphosphate + uracil. It participates in pyrimidine metabolism; UMP biosynthesis via salvage pathway; UMP from uracil: step 1/1. With respect to regulation, allosterically activated by GTP. Functionally, catalyzes the conversion of uracil and 5-phospho-alpha-D-ribose 1-diphosphate (PRPP) to UMP and diphosphate. The sequence is that of Uracil phosphoribosyltransferase from Shewanella oneidensis (strain ATCC 700550 / JCM 31522 / CIP 106686 / LMG 19005 / NCIMB 14063 / MR-1).